We begin with the raw amino-acid sequence, 91 residues long: Small ribosomal subunit protein bS18 (91 aa).

The protein belongs to the bacterial ribosomal protein bS18 family. In terms of assembly, part of the 30S ribosomal subunit. Forms a tight heterodimer with protein bS6.

Binds as a heterodimer with protein bS6 to the central domain of the 16S rRNA, where it helps stabilize the platform of the 30S subunit. This Burkholderia multivorans (strain ATCC 17616 / 249) protein is Small ribosomal subunit protein bS18.